A 638-amino-acid polypeptide reads, in one-letter code: Plasma kallikrein (638 aa).

The first 19 residues, 1 to 19 (MILFKQATYFISLFATVSC), serve as a signal peptide directing secretion. 4 consecutive Apple domains span residues 21-104 (CLTQ…LKQC), 111-194 (CHRD…LKPC), 201-284 (CHMN…LLTC), and 292-375 (CHSK…LRLC). Intrachain disulfides connect cysteine 21–cysteine 104, cysteine 47–cysteine 77, cysteine 51–cysteine 57, cysteine 111–cysteine 194, cysteine 137–cysteine 166, cysteine 141–cysteine 147, cysteine 201–cysteine 284, cysteine 227–cysteine 256, cysteine 231–cysteine 237, cysteine 292–cysteine 375, cysteine 318–cysteine 347, cysteine 322–cysteine 328, cysteine 340–cysteine 345, cysteine 383–cysteine 503, cysteine 419–cysteine 435, cysteine 517–cysteine 584, cysteine 548–cysteine 563, and cysteine 574–cysteine 602. Asparagine 127 is a glycosylation site (N-linked (GlcNAc...) asparagine). N-linked (GlcNAc...) asparagine glycosylation occurs at asparagine 308. A Peptidase S1 domain is found at 391-626 (IVGGTNSSWG…YMDWILEKTQ (236 aa)). A glycan (N-linked (GlcNAc...) asparagine) is linked at asparagine 396. The active-site Charge relay system is histidine 434. The N-linked (GlcNAc...) asparagine glycan is linked to asparagine 453. Aspartate 483 acts as the Charge relay system in catalysis. N-linked (GlcNAc...) asparagine glycosylation is present at asparagine 494. The active-site Charge relay system is the serine 578.

This sequence belongs to the peptidase S1 family. Plasma kallikrein subfamily. In terms of assembly, forms a heterodimer with SERPINA5. The zymogen is activated by factor XIIa, which cleaves the molecule into a light chain, which contains the active site, and a heavy chain, which associates with HMW kininogen. These chains are linked by one or more disulfide bonds. Interacts with iripin-3, a serine protease inhibitor from Ixodes ricinus saliva. Interacts with iripin-1, a serine protease inhibitor from Ixodes ricinus saliva. In terms of tissue distribution, found in plasma (at protein level).

Its subcellular location is the secreted. It carries out the reaction Cleaves selectively Arg-|-Xaa and Lys-|-Xaa bonds, including Lys-|-Arg and Arg-|-Ser bonds in (human) kininogen to release bradykinin.. With respect to regulation, inhibited by SERPINA5. Participates in the surface-dependent activation of blood coagulation. Activates, in a reciprocal reaction, coagulation factor XII/F12 after binding to negatively charged surfaces. Releases bradykinin from HMW kininogen and may also play a role in the renin-angiotensin system by converting prorenin into renin. This is Plasma kallikrein (KLKB1) from Homo sapiens (Human).